The primary structure comprises 582 residues: Multicopper oxidase LPR1 homolog 1 (582 aa).

An N-terminal signal peptide occupies residues Met1–Gly20. Residues His150, His152, His198, and His200 each coordinate Cu cation. 3 N-linked (GlcNAc...) asparagine glycosylation sites follow: Asn256, Asn300, and Asn308. The region spanning Pro285–Thr354 is the Plastocyanin-like domain. Cu cation-binding residues include His467, His470, and His472. Asn504 is a glycosylation site (N-linked (GlcNAc...) asparagine). 5 residues coordinate Cu cation: His563, Cys564, His565, His569, and Met574.

This sequence belongs to the multicopper oxidase family. Requires Cu cation as cofactor. As to expression, highly expressed in roots, and at lower levels in basal stems and leaf blades.

It is found in the endoplasmic reticulum membrane. In terms of biological role, multicopper oxidase that may play a role in the maintenance of inorganic phosphate homeostasis. This is Multicopper oxidase LPR1 homolog 1 from Oryza sativa subsp. japonica (Rice).